Here is a 483-residue protein sequence, read N- to C-terminus: Inositol-pentakisphosphate 2-kinase (483 aa).

The short motif at 140 to 144 is the EXKPK motif element; the sequence is EIKPK. Positions 279–298 are disordered; sequence SNRSGEPRKMHLSESKPHCE. Positions 281–297 are enriched in basic and acidic residues; the sequence is RSGEPRKMHLSESKPHC.

It belongs to the IPK1 type 2 family. Expressed both maternally and zygotically. Expressed in cleavage-stage embryos. Ubiquitously distributed throughout blastula stages of embryogenesis. At the onset of gastrulation, it is enriched in cells around the blastoderm margin. At shield stage, expression is detected in the deep involuted cells that contribute to mesendoderm. During mid and late gastrula stages, it is strongly expressed in axial mesendoderm. However, it is not present in the nascent tailbud at yolk plug closure (YPC) stage. Expression in axial mesendoderm is reduced at the 2 somite stage (SS). At 6 SS, it is expressed in cells surrounding Kupffer's vesicle, but apparently not within. By 10 SS, it is no longer detected as a specific signal above background.

The protein resides in the cytoplasm. It is found in the nucleus. The catalysed reaction is 1D-myo-inositol 1,3,4,5,6-pentakisphosphate + ATP = 1D-myo-inositol hexakisphosphate + ADP + H(+). Its function is as follows. Phosphorylates Ins(1,3,4,5,6)P5 at position 2 to form Ins(1,2,3,4,5,6)P6 (InsP6 or phytate). InsP6 is involved in many processes such as mRNA export, non-homologous end-joining, endocytosis and ion channel regulation. InsP6 also acts as a key regulator of left-right asymmetry in embryo, probably by regulating asymmetric Ca(2+) during left-right specification. This is Inositol-pentakisphosphate 2-kinase (ippk) from Danio rerio (Zebrafish).